The following is a 186-amino-acid chain: NADH dehydrogenase [ubiquinone] 1 beta subcomplex subunit 8, mitochondrial (186 aa).

The transit peptide at 1–28 (MAVARAGVLGVQWLQRASRNVMPLGART) directs the protein to the mitochondrion. The helical transmembrane segment at 133-153 (LFGFLAFMIFMCWVGDVYPVY) threads the bilayer.

Belongs to the complex I NDUFB8 subunit family. As to quaternary structure, complex I is composed of 45 different subunits.

The protein localises to the mitochondrion inner membrane. Accessory subunit of the mitochondrial membrane respiratory chain NADH dehydrogenase (Complex I), that is believed not to be involved in catalysis. Complex I functions in the transfer of electrons from NADH to the respiratory chain. The immediate electron acceptor for the enzyme is believed to be ubiquinone. This chain is NADH dehydrogenase [ubiquinone] 1 beta subcomplex subunit 8, mitochondrial (NDUFB8), found in Homo sapiens (Human).